Consider the following 130-residue polypeptide: MMRQSLQAVLPEISGNKTSSLRKSVCSDLLTLFNSPHSALPSLLVSGMPEWQVHNPSDKHLQSWYCRQLRSALLFHEPRIAALQVNLKEAYCHTLAISLEIMLYHDDEPLTFDLVWDNGGWRSATLENVS.

The protein belongs to the GpW/Gp25 family. IraD subfamily. In terms of assembly, interacts with RssB.

The protein localises to the cytoplasm. Functionally, inhibits RpoS proteolysis by regulating RssB activity, thereby increasing the stability of the sigma stress factor RpoS during oxidative stress. Its effect on RpoS stability is due to its interaction with RssB, which probably blocks the interaction of RssB with RpoS, and the consequent delivery of the RssB-RpoS complex to the ClpXP protein degradation pathway. The sequence is that of Anti-adapter protein IraD from Escherichia coli (strain K12 / MC4100 / BW2952).